The following is a 119-amino-acid chain: Large ribosomal subunit protein bL20c (119 aa).

It belongs to the bacterial ribosomal protein bL20 family.

Its subcellular location is the plastid. It is found in the chloroplast. Functionally, binds directly to 23S ribosomal RNA and is necessary for the in vitro assembly process of the 50S ribosomal subunit. It is not involved in the protein synthesizing functions of that subunit. The polypeptide is Large ribosomal subunit protein bL20c (Oedogonium cardiacum (Filamentous green alga)).